A 283-amino-acid polypeptide reads, in one-letter code: Pantothenate synthetase (283 aa).

30-37 contacts ATP; the sequence is MGNLHDGH. Catalysis depends on His37, which acts as the Proton donor. A (R)-pantoate-binding site is contributed by Gln61. Position 61 (Gln61) interacts with beta-alanine. Position 149–152 (149–152) interacts with ATP; that stretch reads GEKD. Gln155 is a (R)-pantoate binding site. 186–189 is an ATP binding site; that stretch reads LSSR.

The protein belongs to the pantothenate synthetase family. In terms of assembly, homodimer.

It localises to the cytoplasm. It carries out the reaction (R)-pantoate + beta-alanine + ATP = (R)-pantothenate + AMP + diphosphate + H(+). It functions in the pathway cofactor biosynthesis; (R)-pantothenate biosynthesis; (R)-pantothenate from (R)-pantoate and beta-alanine: step 1/1. Its function is as follows. Catalyzes the condensation of pantoate with beta-alanine in an ATP-dependent reaction via a pantoyl-adenylate intermediate. This is Pantothenate synthetase from Escherichia coli O157:H7.